The primary structure comprises 82 residues: Small ribosomal subunit protein bS18 (82 aa).

Belongs to the bacterial ribosomal protein bS18 family. As to quaternary structure, part of the 30S ribosomal subunit. Forms a tight heterodimer with protein bS6.

Functionally, binds as a heterodimer with protein bS6 to the central domain of the 16S rRNA, where it helps stabilize the platform of the 30S subunit. The polypeptide is Small ribosomal subunit protein bS18 (Bifidobacterium longum (strain NCC 2705)).